The chain runs to 545 residues: CTP synthase (545 aa).

Residues 1–266 (MTHFIFVTGG…DDLICERFGF (266 aa)) form an amidoligase domain region. CTP is bound at residue Ser13. Ser13 lines the UTP pocket. ATP-binding positions include 14–19 (SLGKGI) and Asp71. Mg(2+)-binding residues include Asp71 and Glu140. CTP contacts are provided by residues 147-149 (DIE), 187-192 (KTKPTQ), and Lys223. UTP-binding positions include 187-192 (KTKPTQ) and Lys223. 239-241 (KDA) provides a ligand contact to ATP. The Glutamine amidotransferase type-1 domain occupies 292–543 (RVAMVGKYVE…IDAAKTQHQK (252 aa)). An L-glutamine-binding site is contributed by Gly353. Cys380 serves as the catalytic Nucleophile; for glutamine hydrolysis. Residues 381–384 (LGMQ), Glu404, and Arg471 contribute to the L-glutamine site. Catalysis depends on residues His516 and Glu518.

Belongs to the CTP synthase family. In terms of assembly, homotetramer.

The enzyme catalyses UTP + L-glutamine + ATP + H2O = CTP + L-glutamate + ADP + phosphate + 2 H(+). It carries out the reaction L-glutamine + H2O = L-glutamate + NH4(+). The catalysed reaction is UTP + NH4(+) + ATP = CTP + ADP + phosphate + 2 H(+). The protein operates within pyrimidine metabolism; CTP biosynthesis via de novo pathway; CTP from UDP: step 2/2. With respect to regulation, allosterically activated by GTP, when glutamine is the substrate; GTP has no effect on the reaction when ammonia is the substrate. The allosteric effector GTP functions by stabilizing the protein conformation that binds the tetrahedral intermediate(s) formed during glutamine hydrolysis. Inhibited by the product CTP, via allosteric rather than competitive inhibition. Catalyzes the ATP-dependent amination of UTP to CTP with either L-glutamine or ammonia as the source of nitrogen. Regulates intracellular CTP levels through interactions with the four ribonucleotide triphosphates. This chain is CTP synthase, found in Acinetobacter baumannii (strain AB307-0294).